The primary structure comprises 116 residues: Phycoerythrin alpha-3 subunit (116 aa).

(2R,3E)-phycoerythrobilin-binding residues include Ser-53, Glu-63, Arg-64, Cys-67, and Lys-85.

It belongs to the phycoerythrin family. As to quaternary structure, heterotetramer of 2 different alpha chains and 2 identical beta chains which form 2 alpha-beta heterodimers within the heterotetramer. The two alpha-beta heterodimers are rotated to an open configuration in contrast to the closed configuration found in other cryptophyte species due to the insertion of a single amino acid, Asp-65, in a conserved region of the alpha chain. In the open form, the central chromophores are not in physical contact but are separated by a water-filled channel. Contains three phycoerythrobilin chromophores with binding mediated by both the alpha and beta subunits.

Its subcellular location is the plastid. It is found in the chloroplast thylakoid membrane. Its function is as follows. Light-harvesting photosynthetic tetrapyrrole chromophore-protein from the phycobiliprotein complex. The chain is Phycoerythrin alpha-3 subunit from Hemiselmis andersenii (Cryptophyte alga).